Here is a 284-residue protein sequence, read N- to C-terminus: Probable endonuclease 4 (284 aa).

The Zn(2+) site is built by H69, H109, E145, D179, H182, H216, D229, H231, and E261.

It belongs to the AP endonuclease 2 family. It depends on Zn(2+) as a cofactor.

The catalysed reaction is Endonucleolytic cleavage to 5'-phosphooligonucleotide end-products.. In terms of biological role, endonuclease IV plays a role in DNA repair. It cleaves phosphodiester bonds at apurinic or apyrimidinic (AP) sites, generating a 3'-hydroxyl group and a 5'-terminal sugar phosphate. The chain is Probable endonuclease 4 from Klebsiella pneumoniae subsp. pneumoniae (strain ATCC 700721 / MGH 78578).